A 310-amino-acid polypeptide reads, in one-letter code: ADP-L-glycero-D-manno-heptose-6-epimerase (310 aa).

NADP(+) is bound by residues 10–11, 31–32, K38, K53, 75–79, and N92; these read FI, DN, and EGACS. Catalysis depends on Y140, which acts as the Proton acceptor. K144 serves as a coordination point for NADP(+). Residue N169 participates in substrate binding. The NADP(+) site is built by V170 and K178. Catalysis depends on K178, which acts as the Proton acceptor. Substrate contacts are provided by residues S180, H187, 201 to 204, and R209; that span reads FEGS. An N6-acetyllysine modification is found at K267. Y272 is a binding site for substrate.

This sequence belongs to the NAD(P)-dependent epimerase/dehydratase family. HldD subfamily. As to quaternary structure, homopentamer. The cofactor is NADP(+).

The enzyme catalyses ADP-D-glycero-beta-D-manno-heptose = ADP-L-glycero-beta-D-manno-heptose. It functions in the pathway nucleotide-sugar biosynthesis; ADP-L-glycero-beta-D-manno-heptose biosynthesis; ADP-L-glycero-beta-D-manno-heptose from D-glycero-beta-D-manno-heptose 7-phosphate: step 4/4. Catalyzes the interconversion between ADP-D-glycero-beta-D-manno-heptose and ADP-L-glycero-beta-D-manno-heptose via an epimerization at carbon 6 of the heptose. The sequence is that of ADP-L-glycero-D-manno-heptose-6-epimerase from Escherichia coli (strain ATCC 8739 / DSM 1576 / NBRC 3972 / NCIMB 8545 / WDCM 00012 / Crooks).